We begin with the raw amino-acid sequence, 826 residues long: Homeobox-leucine zipper protein HDG5 (826 aa).

2 disordered regions span residues 1–34 (MLTMGEGNVMTSNNRFASPPQQPSSSSPGTIQNP) and 69–119 (EMME…HRHT). Residues 23-34 (PSSSSPGTIQNP) are compositionally biased toward low complexity. Residues 88 to 105 (EDPKFGNESDVNELHDDE) show a composition bias toward basic and acidic residues. Residues 110–119 (AKKKRYHRHT) show a composition bias toward basic residues. A DNA-binding region (homeobox) is located at residues 111–170 (KKKRYHRHTNRQIQEMEALFKENPHPDDKQRKRLSAELGLKPRQVKFWFQNRRTQMKAQQ). Positions 165 to 189 (QMKAQQDRNENVMLRAENDNLKSEN) form a coiled coil. Residues 314–558 (ADEEKVIAME…LQRQCERIAS (245 aa)) enclose the START domain.

The protein belongs to the HD-ZIP homeobox family. Class IV subfamily. In terms of tissue distribution, expressed in shoot apical meristem (SAM) with higher levels in L1 cells and the epidermal layer of young leaves. Expressed in the L1 of apical inflorescence meristems, early flower primordia, carpel and stamen filament epidermis, ovule primordia, nucellus and chalaze.

The protein localises to the nucleus. Probable transcription factor. Involved, together with PDF2, in the regulation of flower organs development by promoting the expression of APETALA 3 (AP3) in the epidermis and internal cell layers of developing flowers. The protein is Homeobox-leucine zipper protein HDG5 of Arabidopsis thaliana (Mouse-ear cress).